Reading from the N-terminus, the 278-residue chain is Expansin-B17 (278 aa).

A signal peptide spans 1–26 (MAAASSRSFSLCVLLLLLLLAPPISA). In terms of domain architecture, Expansin-like EG45 spans 66-176 (GGACGYGSLV…RRTACKYGGK (111 aa)). 3 disulfides stabilise this stretch: Cys69–Cys98, Cys101–Cys171, and Cys106–Cys112. In terms of domain architecture, Expansin-like CBD spans 189-270 (FWLSLLVEFE…NWKPTATYTS (82 aa)).

Belongs to the expansin family. Expansin B subfamily.

It localises to the secreted. The protein resides in the cell wall. It is found in the membrane. Functionally, may cause loosening and extension of plant cell walls by disrupting non-covalent bonding between cellulose microfibrils and matrix glucans. No enzymatic activity has been found. May be required for rapid internodal elongation in deepwater rice during submergence. In Oryza sativa subsp. japonica (Rice), this protein is Expansin-B17 (EXPB17).